The following is a 422-amino-acid chain: 3-phosphoshikimate 1-carboxyvinyltransferase (422 aa).

3-phosphoshikimate-binding residues include Lys24, Ser25, and Arg29. Lys24 serves as a coordination point for phosphoenolpyruvate. Phosphoenolpyruvate is bound by residues Gly93 and Arg121. Residues Ser164, Ser165, Gln166, Glu308, and His335 each contribute to the 3-phosphoshikimate site. A phosphoenolpyruvate-binding site is contributed by Gln166. Residue Glu308 is the Proton acceptor of the active site. The phosphoenolpyruvate site is built by Arg339, Arg380, and Lys405.

This sequence belongs to the EPSP synthase family. Monomer.

It localises to the cytoplasm. The enzyme catalyses 3-phosphoshikimate + phosphoenolpyruvate = 5-O-(1-carboxyvinyl)-3-phosphoshikimate + phosphate. It participates in metabolic intermediate biosynthesis; chorismate biosynthesis; chorismate from D-erythrose 4-phosphate and phosphoenolpyruvate: step 6/7. Catalyzes the transfer of the enolpyruvyl moiety of phosphoenolpyruvate (PEP) to the 5-hydroxyl of shikimate-3-phosphate (S3P) to produce enolpyruvyl shikimate-3-phosphate and inorganic phosphate. In Saccharopolyspora erythraea (strain ATCC 11635 / DSM 40517 / JCM 4748 / NBRC 13426 / NCIMB 8594 / NRRL 2338), this protein is 3-phosphoshikimate 1-carboxyvinyltransferase.